The primary structure comprises 368 residues: MVTGWHRPTWIEIDRAAIRENIKNEQNKLPENVDLWAVVKANAYGHGIIEVARTAKEAGAKGFCVAILDEALALREAGFQDDFILVLGATRKEDANLAAKNHISLTVFREDWLEELTLEAPLRIHLKVDSGMGRLGIRTTDEARRIETTIAKDNQLQLEGIYTHFATADQLETSYFEQQLAKFQTILTSLKNRPTYVHTANSAASLLQPQIGFDAIRFGISMYGLTPSTEIKTSLPFELKPALALYTEMVHVKELAPGDSVSYGATYTATEREWVATLPIGYADGLIRHYSGFHVLVDGELAPIIGRVCMDQTIIKLPREFQTGSKVTIIGTDHGNTITADDAAHYLDTINYEVTCLLNERIPRKYIH.

The active-site Proton acceptor; specific for D-alanine is the lysine 40. The residue at position 40 (lysine 40) is an N6-(pyridoxal phosphate)lysine. Substrate is bound at residue arginine 134. The Proton acceptor; specific for L-alanine role is filled by tyrosine 263. Position 310 (methionine 310) interacts with substrate.

It belongs to the alanine racemase family. It depends on pyridoxal 5'-phosphate as a cofactor.

It carries out the reaction L-alanine = D-alanine. The protein operates within amino-acid biosynthesis; D-alanine biosynthesis; D-alanine from L-alanine: step 1/1. Its function is as follows. Catalyzes the interconversion of L-alanine and D-alanine. May also act on other amino acids. In Listeria monocytogenes serotype 4b (strain F2365), this protein is Alanine racemase (alr).